The chain runs to 231 residues: Large ribosomal subunit protein uL1 (231 aa).

This sequence belongs to the universal ribosomal protein uL1 family. Part of the 50S ribosomal subunit.

In terms of biological role, binds directly to 23S rRNA. The L1 stalk is quite mobile in the ribosome, and is involved in E site tRNA release. Functionally, protein L1 is also a translational repressor protein, it controls the translation of the L11 operon by binding to its mRNA. The polypeptide is Large ribosomal subunit protein uL1 (Ralstonia nicotianae (strain ATCC BAA-1114 / GMI1000) (Ralstonia solanacearum)).